The sequence spans 357 residues: Protein NDRG2 (357 aa).

The segment covering 1–14 (MAELREVQITEEKP) has biased composition (basic and acidic residues). Residues 1-26 (MAELREVQITEEKPLLPGQTPEVAKT) form a disordered region. Ala-2 is modified (N-acetylalanine). Thr-20 bears the Phosphothreonine mark. Phosphoserine occurs at positions 312 and 314. Thr-316 carries the post-translational modification Phosphothreonine. Ser-318 carries the phosphoserine modification. Position 320 is a phosphothreonine (Thr-320). The interval 320–357 (TSAASIDGNRSRSRTLSQSSESGTLSSGPPGHTMEVSC) is disordered. Residues Ser-321, Ser-324, and Ser-330 each carry the phosphoserine modification. The span at 333–347 (RTLSQSSESGTLSSG) shows a compositional bias: low complexity. Thr-334 carries the phosphothreonine modification. Phosphoserine is present on residues Ser-336, Ser-338, Ser-339, and Ser-341. A Phosphothreonine modification is found at Thr-343. Ser-356 bears the Phosphoserine mark.

It belongs to the NDRG family. As to quaternary structure, interacts with CTNNB1.

Its subcellular location is the cytoplasm. It is found in the perinuclear region. The protein resides in the cell projection. The protein localises to the growth cone. In terms of biological role, contributes to the regulation of the Wnt signaling pathway. Down-regulates CTNNB1-mediated transcriptional activation of target genes, such as CCND1, and may thereby act as tumor suppressor. May be involved in dendritic cell and neuron differentiation. This Bos taurus (Bovine) protein is Protein NDRG2 (NDRG2).